The primary structure comprises 506 residues: Deoxyribodipyrimidine photo-lyase (506 aa).

A compositionally biased stretch (pro residues) spans 1–21 (MPPTSVSPPRTAPGPANPSPA). A disordered region spans residues 1–33 (MPPTSVSPPRTAPGPANPSPAHPSRVRVIHPGG). One can recognise a Photolyase/cryptochrome alpha/beta domain in the interval 38–171 (GPVVYWMLRD…AVHQVDAHNV (134 aa)). FAD contacts are provided by residues Tyr268 and 282 to 285 (SGLS). Position 312 is a phosphoserine (Ser312). FAD contacts are provided by residues 319–327 (ELVVRRELA), Lys390, Asn421, Asp427, and 427–429 (DGR). The segment at 487–506 (KKRNAEESPNPVVKLSKSQH) is disordered.

This sequence belongs to the DNA photolyase class-2 family. FAD serves as cofactor. As to expression, expressed in proliferating tissues. Highly expressed in roots and shoot apical meristem (SAM). Expressed in leaves, flag leaves, and panicle.

Its subcellular location is the nucleus. It carries out the reaction cyclobutadipyrimidine (in DNA) = 2 pyrimidine residues (in DNA).. Involved in repair of UV radiation-induced DNA damage. Catalyzes the light-dependent monomerization (300-600 nm) of cyclobutylpyrimidine dimers (CPDs), which are formed between adjacent bases on the same DNA strand upon exposure to ultraviolet radiation. Required for plant survival in the presence of UV-B light. Not involved in the repair of (6-4) photoproducts. In Oryza sativa subsp. japonica (Rice), this protein is Deoxyribodipyrimidine photo-lyase (PHR).